The sequence spans 197 residues: Holliday junction branch migration complex subunit RuvA (197 aa).

Residues 1–63 are domain I; that stretch reads MINKIHGKVI…ENELKLFGFL (63 aa). The domain II stretch occupies residues 64-139; that stretch reads NSDEREIFKE…KLLINSELES (76 aa). Residue Ser139 is a region of interest, flexible linker. The tract at residues 140–197 is domain III; sequence TGLFRFKELEESIVSMGFDRKIVNSKIREAFNLAEFANLKDSEKEQFLFKEVLKRISN.

Belongs to the RuvA family. In terms of assembly, homotetramer. Forms an RuvA(8)-RuvB(12)-Holliday junction (HJ) complex. HJ DNA is sandwiched between 2 RuvA tetramers; dsDNA enters through RuvA and exits via RuvB. An RuvB hexamer assembles on each DNA strand where it exits the tetramer. Each RuvB hexamer is contacted by two RuvA subunits (via domain III) on 2 adjacent RuvB subunits; this complex drives branch migration. In the full resolvosome a probable DNA-RuvA(4)-RuvB(12)-RuvC(2) complex forms which resolves the HJ.

It is found in the cytoplasm. Its function is as follows. The RuvA-RuvB-RuvC complex processes Holliday junction (HJ) DNA during genetic recombination and DNA repair, while the RuvA-RuvB complex plays an important role in the rescue of blocked DNA replication forks via replication fork reversal (RFR). RuvA specifically binds to HJ cruciform DNA, conferring on it an open structure. The RuvB hexamer acts as an ATP-dependent pump, pulling dsDNA into and through the RuvAB complex. HJ branch migration allows RuvC to scan DNA until it finds its consensus sequence, where it cleaves and resolves the cruciform DNA. The protein is Holliday junction branch migration complex subunit RuvA of Borreliella burgdorferi (strain ATCC 35210 / DSM 4680 / CIP 102532 / B31) (Borrelia burgdorferi).